We begin with the raw amino-acid sequence, 367 residues long: Glutamate 5-kinase (367 aa).

ATP is bound at residue Lys10. Residues Ser50, Asp137, and Asn149 each contribute to the substrate site. ATP contacts are provided by residues 169-170 and 211-217; these read TD and TGGMGTK. Residues 275–353 form the PUA domain; sequence AGEITVDAGA…QQIDAILGYE (79 aa).

The protein belongs to the glutamate 5-kinase family.

Its subcellular location is the cytoplasm. The catalysed reaction is L-glutamate + ATP = L-glutamyl 5-phosphate + ADP. It functions in the pathway amino-acid biosynthesis; L-proline biosynthesis; L-glutamate 5-semialdehyde from L-glutamate: step 1/2. Functionally, catalyzes the transfer of a phosphate group to glutamate to form L-glutamate 5-phosphate. The sequence is that of Glutamate 5-kinase from Klebsiella pneumoniae subsp. pneumoniae (strain ATCC 700721 / MGH 78578).